The chain runs to 318 residues: Olfactory receptor 13C7 (318 aa).

At 1-27 (MVSANQTASVTEFILLGLSAHPKLEKT) the chain is on the extracellular side. The chain crosses the membrane as a helical span at residues 28 to 48 (FFVLILLMYLVILLGNGVLIL). The Cytoplasmic segment spans residues 49 to 61 (MTVSNSHLHMPMY). A helical transmembrane segment spans residues 62-82 (FFLGNLSFLDICYTTSSVPLI). Residues 83–100 (LDSFLTPRKTISFSACAV) are Extracellular-facing. Residues 101–121 (QMFLSFAMGATECVLLSMMAF) traverse the membrane as a helical segment. Topologically, residues 122–181 (DRYVAICNPLRYPVVMSKAAYMPKAAGSWVAGSTASMVQTSLAMRLPFCGDNIINHFTCE) are cytoplasmic. A helical transmembrane segment spans residues 182–202 (ILAVLKLACADISVNVISMGV). At 203 to 205 (TNV) the chain is on the extracellular side. A helical transmembrane segment spans residues 206-226 (IFLGVPVLFISFSYVFIIATI). The Cytoplasmic segment spans residues 227–238 (LRIPSAEGRKKA). The chain crosses the membrane as a helical span at residues 239–259 (FSTCSAHLTVVVIFYGTILFM). Residues 260 to 278 (YGKPKSKDPLGADKQDLAD) are Extracellular-facing. The helical transmembrane segment at 279-289 (KLISLFYGVVT) threads the bilayer. Residues 290 to 318 (PMLNPIIYSLRNKDVKAAVRDLIFQKCFA) lie on the Cytoplasmic side of the membrane.

It belongs to the G-protein coupled receptor 1 family.

The protein localises to the cell membrane. Functionally, odorant receptor. This is Olfactory receptor 13C7 from Homo sapiens (Human).